Here is a 325-residue protein sequence, read N- to C-terminus: NADH-quinone oxidoreductase subunit H (325 aa).

Transmembrane regions (helical) follow at residues Ile-11–Phe-31, Ser-50–Phe-69, Leu-81–Val-101, Ile-114–Gly-134, Leu-154–Phe-174, Leu-186–Val-206, Phe-237–Phe-257, Leu-265–Val-285, and Ile-304–Ala-324.

It belongs to the complex I subunit 1 family. In terms of assembly, NDH-1 is composed of 13 different subunits. Subunits NuoA, H, J, K, L, M, N constitute the membrane sector of the complex.

It is found in the cell inner membrane. It catalyses the reaction a quinone + NADH + 5 H(+)(in) = a quinol + NAD(+) + 4 H(+)(out). In terms of biological role, NDH-1 shuttles electrons from NADH, via FMN and iron-sulfur (Fe-S) centers, to quinones in the respiratory chain. The immediate electron acceptor for the enzyme in this species is believed to be ubiquinone. Couples the redox reaction to proton translocation (for every two electrons transferred, four hydrogen ions are translocated across the cytoplasmic membrane), and thus conserves the redox energy in a proton gradient. This subunit may bind ubiquinone. This is NADH-quinone oxidoreductase subunit H from Edwardsiella ictaluri (strain 93-146).